The following is a 93-amino-acid chain: Small ribosomal subunit protein bS18 (93 aa).

Over residues 1–11 (MAPSARNRKPG) the composition is skewed to basic residues. The interval 1-27 (MAPSARNRKPGARSMAKAAALRKPKKK) is disordered.

Belongs to the bacterial ribosomal protein bS18 family. In terms of assembly, part of the 30S ribosomal subunit. Forms a tight heterodimer with protein bS6.

Its function is as follows. Binds as a heterodimer with protein bS6 to the central domain of the 16S rRNA, where it helps stabilize the platform of the 30S subunit. The chain is Small ribosomal subunit protein bS18 from Salinispora tropica (strain ATCC BAA-916 / DSM 44818 / JCM 13857 / NBRC 105044 / CNB-440).